Consider the following 357-residue polypeptide: Phenylalanine--tRNA ligase alpha subunit (357 aa).

Mg(2+) is bound at residue glutamate 257.

The protein belongs to the class-II aminoacyl-tRNA synthetase family. Phe-tRNA synthetase alpha subunit type 1 subfamily. In terms of assembly, tetramer of two alpha and two beta subunits. Mg(2+) is required as a cofactor.

It is found in the cytoplasm. The enzyme catalyses tRNA(Phe) + L-phenylalanine + ATP = L-phenylalanyl-tRNA(Phe) + AMP + diphosphate + H(+). The chain is Phenylalanine--tRNA ligase alpha subunit from Ruegeria sp. (strain TM1040) (Silicibacter sp.).